A 279-amino-acid chain; its full sequence is Pantothenate synthetase (279 aa).

26-33 (MGNLHEGH) is a binding site for ATP. The active-site Proton donor is the His33. Gln57 serves as a coordination point for (R)-pantoate. Gln57 is a binding site for beta-alanine. Residue 144–147 (GKKD) coordinates ATP. Gln150 is a (R)-pantoate binding site. Residues Val173 and 181–184 (LSSR) contribute to the ATP site.

It belongs to the pantothenate synthetase family. In terms of assembly, homodimer.

It localises to the cytoplasm. The enzyme catalyses (R)-pantoate + beta-alanine + ATP = (R)-pantothenate + AMP + diphosphate + H(+). Its pathway is cofactor biosynthesis; (R)-pantothenate biosynthesis; (R)-pantothenate from (R)-pantoate and beta-alanine: step 1/1. In terms of biological role, catalyzes the condensation of pantoate with beta-alanine in an ATP-dependent reaction via a pantoyl-adenylate intermediate. The chain is Pantothenate synthetase from Burkholderia cenocepacia (strain HI2424).